The primary structure comprises 780 residues: Protein AMEIOTIC 1 (780 aa).

2 disordered regions span residues 32-60 (KKKTSSSHSRNGKDDVNHDSTIQPRSPLS) and 237-327 (APKE…RWSA). The segment covering 50 to 60 (DSTIQPRSPLS) has biased composition (polar residues). Basic and acidic residues-rich tracts occupy residues 263-291 (EVKRSERNCKRKREAEASSKDNNGDEGKK) and 309-327 (RTVESKDGDPRHGKDRWSA). Positions 448 to 547 (VEELTEEVNG…LEEQVTYLSS (100 aa)) form a coiled coil.

It is found in the nucleus. The protein resides in the chromosome. Plays a fundamental role in building the proper chromosome structure at the beginning of meiosis in male meiocytes. Required for the transition from leptotene to zygotene in meiocytes. Required for homologous chromosome pairing, and initiation and progression of meiotic recombination. Regulates meiocyte cytoskeleton organization. In Zea mays (Maize), this protein is Protein AMEIOTIC 1.